The primary structure comprises 450 residues: Tubulin alpha-1 chain (450 aa).

Glutamine 11, glutamate 71, glycine 144, threonine 145, threonine 179, asparagine 206, and asparagine 228 together coordinate GTP. A Mg(2+)-binding site is contributed by glutamate 71. Residue glutamate 254 is part of the active site.

This sequence belongs to the tubulin family. As to quaternary structure, dimer of alpha and beta chains. A typical microtubule is a hollow water-filled tube with an outer diameter of 25 nm and an inner diameter of 15 nM. Alpha-beta heterodimers associate head-to-tail to form protofilaments running lengthwise along the microtubule wall with the beta-tubulin subunit facing the microtubule plus end conferring a structural polarity. Microtubules usually have 13 protofilaments but different protofilament numbers can be found in some organisms and specialized cells. It depends on Mg(2+) as a cofactor. Undergoes a tyrosination/detyrosination cycle, the cyclic removal and re-addition of a C-terminal tyrosine residue by the enzymes tubulin tyrosine carboxypeptidase (TTCP) and tubulin tyrosine ligase (TTL), respectively.

It is found in the cytoplasm. Its subcellular location is the cytoskeleton. It carries out the reaction GTP + H2O = GDP + phosphate + H(+). Functionally, tubulin is the major constituent of microtubules, a cylinder consisting of laterally associated linear protofilaments composed of alpha- and beta-tubulin heterodimers. Microtubules grow by the addition of GTP-tubulin dimers to the microtubule end, where a stabilizing cap forms. Below the cap, tubulin dimers are in GDP-bound state, owing to GTPase activity of alpha-tubulin. The protein is Tubulin alpha-1 chain (TUBA1) of Hordeum vulgare (Barley).